Here is a 345-residue protein sequence, read N- to C-terminus: Uroporphyrinogen decarboxylase (345 aa).

Substrate contacts are provided by residues 27–31, Phe-46, Asp-76, Tyr-152, Ser-207, and His-321; that span reads RQAGR.

Belongs to the uroporphyrinogen decarboxylase family. In terms of assembly, homodimer.

Its subcellular location is the cytoplasm. It catalyses the reaction uroporphyrinogen III + 4 H(+) = coproporphyrinogen III + 4 CO2. The protein operates within porphyrin-containing compound metabolism; protoporphyrin-IX biosynthesis; coproporphyrinogen-III from 5-aminolevulinate: step 4/4. In terms of biological role, catalyzes the decarboxylation of four acetate groups of uroporphyrinogen-III to yield coproporphyrinogen-III. The polypeptide is Uroporphyrinogen decarboxylase (Staphylococcus aureus (strain MRSA252)).